The primary structure comprises 320 residues: Malate dehydrogenase (320 aa).

NAD(+) is bound by residues 10-15 (GAGQIG) and Asp34. Substrate is bound by residues Arg83 and Arg89. NAD(+) is bound by residues Asn96 and 119–121 (ITN). Substrate is bound by residues Asn121 and Arg152. Residue His176 is the Proton acceptor of the active site.

It belongs to the LDH/MDH superfamily. MDH type 3 family.

The enzyme catalyses (S)-malate + NAD(+) = oxaloacetate + NADH + H(+). Its function is as follows. Catalyzes the reversible oxidation of malate to oxaloacetate. The sequence is that of Malate dehydrogenase from Dinoroseobacter shibae (strain DSM 16493 / NCIMB 14021 / DFL 12).